The chain runs to 274 residues: MVKGPGLYTEIGKKARDLLYRDYQGDQKFSVTTYSSTGVAITTTGTNKGSLFLGDVATQVKNNNFTADVKVSTDSSLLTTLTFDEPAPGLKVIVQAKLPDHKSGKAEVQYFHDYAGISTSVGFTATPIVNFSGVVGTNGLSLGTDVAYNTESGNFKHFNAGFNFTKDDLTASLILNDKGEKLNASYYQIVSPSTVVGAEISHNFTTKENAITVGTQHALDPLTTVKARVNNAGVANALIQHEWRPKSFFTVSGEVDSKAIDKSAKVGIALALKP.

S76 carries the post-translational modification Phosphoserine.

This sequence belongs to the eukaryotic mitochondrial porin (TC 1.B.8.1) family. As to quaternary structure, interacts with KIN14F/KP1. Interacts with FBA6 and GAPC1. Expressed in leaf tips, anthers and stigma.

It localises to the cell membrane. It is found in the mitochondrion outer membrane. In terms of biological role, forms a channel through the mitochondrial outer membrane that allows diffusion of small hydrophilic molecules. The channel adopts an open conformation at low or zero membrane potential and a closed conformation at potentials above 30-40 mV. The open state has a weak anion selectivity whereas the closed state is cation-selective. The sequence is that of Mitochondrial outer membrane protein porin 3 (VDAC3) from Arabidopsis thaliana (Mouse-ear cress).